Here is a 96-residue protein sequence, read N- to C-terminus: Beta-defensin 20 (96 aa).

Residues 1-21 (MKLPQLLLILLFVVLADSVQP) form the signal peptide. 3 cysteine pairs are disulfide-bonded: Cys-24/Cys-52, Cys-32/Cys-46, and Cys-36/Cys-53.

It belongs to the beta-defensin family.

The protein resides in the secreted. Its function is as follows. Has antibacterial activity. In Rattus norvegicus (Rat), this protein is Beta-defensin 20 (Defb20).